Here is a 171-residue protein sequence, read N- to C-terminus: MNHFELFDLPVALDIDLVALKANFLKLQQLHHPDKALDKDQALIMSSDINQAYKILSQVDSRAAYLLSLKKQDHHLDQSIHDFEFLQSALEIREQLDEADSQEQLITLKNEVKQWVDGLIREFKIDYSDEDWSEARDTVRKLRFFQRVLNDIDKAEDQLLDEDSFDLDDDF.

A J domain is found at 2–69 (NHFELFDLPV…DSRAAYLLSL (68 aa)).

Belongs to the HscB family. Interacts with HscA and stimulates its ATPase activity.

Its function is as follows. Co-chaperone involved in the maturation of iron-sulfur cluster-containing proteins. Seems to help targeting proteins to be folded toward HscA. The polypeptide is Co-chaperone protein HscB homolog (Acinetobacter baylyi (strain ATCC 33305 / BD413 / ADP1)).